A 150-amino-acid chain; its full sequence is Large ribosomal subunit protein bL9 (150 aa).

Belongs to the bacterial ribosomal protein bL9 family.

Binds to the 23S rRNA. This is Large ribosomal subunit protein bL9 from Vibrio campbellii (strain ATCC BAA-1116).